A 92-amino-acid polypeptide reads, in one-letter code: MAVLAGSLLGPTSRSAALLGGRWLQPRAWLGFPDAWGLPTPQQARGKARGNEYQPSNIKRKNKHGWVRRLSTPAGVQVILRRMLKGRKSLSH.

Residues 1–46 (MAVLAGSLLGPTSRSAALLGGRWLQPRAWLGFPDAWGLPTPQQARG) constitute a mitochondrion transit peptide. S71 is subject to Phosphoserine.

It belongs to the bacterial ribosomal protein bL34 family. As to quaternary structure, component of the mitochondrial large ribosomal subunit (mt-LSU). Mature mammalian 55S mitochondrial ribosomes consist of a small (28S) and a large (39S) subunit. The 28S small subunit contains a 12S ribosomal RNA (12S mt-rRNA) and 30 different proteins. The 39S large subunit contains a 16S rRNA (16S mt-rRNA), a copy of mitochondrial valine transfer RNA (mt-tRNA(Val)), which plays an integral structural role, and 52 different proteins.

Its subcellular location is the mitochondrion. This Homo sapiens (Human) protein is Large ribosomal subunit protein bL34m (MRPL34).